The sequence spans 179 residues: Inner membrane-spanning protein YciB (179 aa).

The next 6 helical transmembrane spans lie at 3 to 23, 24 to 44, 49 to 69, 76 to 96, 121 to 141, and 149 to 169; these read FLFDLFPVILFFAAFKLADIY, TATAVAIGATVLQIGWVWFRH, PMQWVSLLIIAVFGGATLVLH, WKPTVLYWMFAVGLLGSVIGW, AAWAGFFAAMGVLNLYVAYQF, and FKLFGSMGLMLVFIVAQSVWL.

Belongs to the YciB family.

The protein resides in the cell inner membrane. Its function is as follows. Plays a role in cell envelope biogenesis, maintenance of cell envelope integrity and membrane homeostasis. In Cupriavidus necator (strain ATCC 17699 / DSM 428 / KCTC 22496 / NCIMB 10442 / H16 / Stanier 337) (Ralstonia eutropha), this protein is Inner membrane-spanning protein YciB.